A 438-amino-acid polypeptide reads, in one-letter code: MKSFYLETFGCQMNVVDSEQIVGLVQSLGYSSVDSPEQANLIILNTCSIRARAERKVYGHLGRFKPLKQRRPELIIAVCGCVAQQEGQRMLEKVPYLDIVCGTHNIHRLADMVRDAELHRARHVEVDFLEADKRRRLFPERAPSAEVSRFVTVIQGCDNFCSYCIVPHVRGREVSRPSAEVLEEVRLLVEQGAREITLIGQNVNSYGCKEDDEISFASLLRKVAEVDGLERIRFMTSHPKDLSDELIDCFADLDKLCKHIHLPVQAGGDAVLKAMRRGYTRDQYLGRIERLRRVCPEIRMTSDVIVGFPGETESEFEQTMDLLERARFTEIYSFIFSARPGTSAADLPDDIPKEVKQQWFDRMLALQEEITRQYHQMDIGQVLPVLVEGSSRQGNGQLFGRTTWNRIVNFDGNPDLVGRIVPVRLTVAYRNSHLGERV.

The MTTase N-terminal domain maps to 2 to 118; that stretch reads KSFYLETFGC…LADMVRDAEL (117 aa). [4Fe-4S] cluster-binding residues include cysteine 11, cysteine 47, cysteine 81, cysteine 157, cysteine 161, and cysteine 164. One can recognise a Radical SAM core domain in the interval 143 to 373; that stretch reads PSAEVSRFVT…LALQEEITRQ (231 aa). The TRAM domain occupies 376-438; the sequence is QMDIGQVLPV…YRNSHLGERV (63 aa).

The protein belongs to the methylthiotransferase family. MiaB subfamily. As to quaternary structure, monomer. It depends on [4Fe-4S] cluster as a cofactor.

The protein resides in the cytoplasm. The enzyme catalyses N(6)-dimethylallyladenosine(37) in tRNA + (sulfur carrier)-SH + AH2 + 2 S-adenosyl-L-methionine = 2-methylsulfanyl-N(6)-dimethylallyladenosine(37) in tRNA + (sulfur carrier)-H + 5'-deoxyadenosine + L-methionine + A + S-adenosyl-L-homocysteine + 2 H(+). Catalyzes the methylthiolation of N6-(dimethylallyl)adenosine (i(6)A), leading to the formation of 2-methylthio-N6-(dimethylallyl)adenosine (ms(2)i(6)A) at position 37 in tRNAs that read codons beginning with uridine. The sequence is that of tRNA-2-methylthio-N(6)-dimethylallyladenosine synthase from Syntrophotalea carbinolica (strain DSM 2380 / NBRC 103641 / GraBd1) (Pelobacter carbinolicus).